The chain runs to 333 residues: D-alanine--D-alanine ligase (333 aa).

An ATP-grasp domain is found at 124–329 (KMWFSALGIR…FAQYLSGNIM (206 aa)). ATP is bound at residue 154–209 (ALEKWGSIFIKAASQGSSVGCYRVDNKEQLANSLEEAFKYSPYVVVEKTINARELE). Mg(2+) contacts are provided by D283, E296, and N298.

Belongs to the D-alanine--D-alanine ligase family. Mg(2+) is required as a cofactor. Mn(2+) serves as cofactor.

The protein localises to the cytoplasm. It catalyses the reaction 2 D-alanine + ATP = D-alanyl-D-alanine + ADP + phosphate + H(+). The protein operates within cell wall biogenesis; peptidoglycan biosynthesis. In terms of biological role, cell wall formation. This chain is D-alanine--D-alanine ligase, found in Shewanella halifaxensis (strain HAW-EB4).